The chain runs to 394 residues: 8-amino-7-oxononanoate synthase (394 aa).

Substrate is bound at residue Arg21. 112–113 (GY) lines the pyridoxal 5'-phosphate pocket. His137 serves as a coordination point for substrate. Pyridoxal 5'-phosphate is bound by residues Ser183, His211, and Thr239. At Lys242 the chain carries N6-(pyridoxal phosphate)lysine. Residue Thr358 coordinates substrate.

This sequence belongs to the class-II pyridoxal-phosphate-dependent aminotransferase family. BioF subfamily. Homodimer. Pyridoxal 5'-phosphate is required as a cofactor.

It carries out the reaction 6-carboxyhexanoyl-[ACP] + L-alanine + H(+) = (8S)-8-amino-7-oxononanoate + holo-[ACP] + CO2. Its pathway is cofactor biosynthesis; biotin biosynthesis. Its function is as follows. Catalyzes the decarboxylative condensation of pimeloyl-[acyl-carrier protein] and L-alanine to produce 8-amino-7-oxononanoate (AON), [acyl-carrier protein], and carbon dioxide. This Burkholderia pseudomallei (strain 1710b) protein is 8-amino-7-oxononanoate synthase.